A 473-amino-acid chain; its full sequence is Cannabinoid receptor 1 (473 aa).

The Extracellular segment spans residues 1-118 (MKSILDGLAD…CFMILTASQQ (118 aa)). A required for mitochondrial localization region spans residues 2–23 (KSILDGLADTTFRTITTDLLYM). Residues Asn-79 and Asn-85 are each glycosylated (N-linked (GlcNAc...) asparagine). Residues 119 to 144 (LIIAVLSLTLGTFTVLENFLVLCVIL) traverse the membrane as a helical segment. The Cytoplasmic portion of the chain corresponds to 145-156 (QSRTLRCRPSYH). Residues 157-177 (FIGSLAVADLLGSVIFVYSFL) traverse the membrane as a helical segment. The Extracellular segment spans residues 178–189 (DFHVFHRKDSSN). Residues 190–214 (VFLFKLGGVTASFTASVGSLFLTAI) form a helical membrane-spanning segment. At 215-234 (DRYISIHRPLAYKRIVTRTK) the chain is on the cytoplasmic side. A helical transmembrane segment spans residues 235–257 (AVIAFCVMWTIAIIIAVLPLLGW). The Extracellular portion of the chain corresponds to 258-275 (NCKKLKSVCSDIFPLIDE). A helical membrane pass occupies residues 276 to 301 (NYLMFWIGVTSILLLFIVYAYVYILW). Residues 302 to 346 (KAHSHAVRMLQRGTQKSIIIHTSEDGKVQITRPEQTRMDIRLAKT) are Cytoplasmic-facing. The chain crosses the membrane as a helical span at residues 347-367 (LVLILVVLIICWGPLLAIMVY). The Extracellular portion of the chain corresponds to 368 to 379 (DVFGKMNNPIKT). Residues 380-401 (VFAFCSMLCLMDSTVNPIIYAL) form a helical membrane-spanning segment. The Cytoplasmic portion of the chain corresponds to 402 to 473 (RSQDLRHAFL…VSTETSGEAV (72 aa)). Residue Cys-417 is the site of S-palmitoyl cysteine attachment.

Belongs to the G-protein coupled receptor 1 family. Palmitoylation at Cys-417 is important for recruitment at both plasma membrane and lipid rafts and association with G protein alpha subunits.

The protein localises to the cell membrane. The protein resides in the mitochondrion outer membrane. It is found in the cell projection. Its subcellular location is the axon. It localises to the presynapse. Hemopressin, a peptide derived from hemoglobin subunit alpha (HBA1 and/or HBA2), acts as an antagonist peptide: hemopressin-binding efficiently blocks cannabinoid receptor CNR1 and subsequent signaling. In terms of biological role, G-protein coupled receptor for cannabinoids. Mediates many cannabinoid-induced effects in the central nervous system (CNS), as well as in peripheral tissues. Regulates cellular respiration and energy production in response to cannabinoids. Signaling typically involves reduction in cyclic AMP. This Taricha granulosa (Roughskin newt) protein is Cannabinoid receptor 1 (CNR1).